Here is a 286-residue protein sequence, read N- to C-terminus: Perivitellin-2 31 kDa subunit (286 aa).

Residues methionine 1–alanine 30 form the signal peptide. Residue asparagine 101 is glycosylated (N-linked (GlcNAc...) asparagine).

The protein belongs to the tectonin family. Perivitellin-2 is a dimer of heterodimers held together head-to-tail by non-covalent forces. The heterodimer is composed of the tachylectin subunit (31 kDa) and the MACPF subunit (67 kDa) that are disulfide-linked. PV2 is a very high density lipoprotein (VHDL). It contains 3.75% of lipids. The major lipid classes are free sterols and phospholipids and also have significant quantities of energy-providing triacylglycerides and free fatty acids. In terms of tissue distribution, produced by albumen secretory cells. Found in developing eggs.

Its subcellular location is the secreted. The protein resides in the target cell membrane. Functionally, the egg defensive protein perivitellin-2 is a pore-forming two-subunit glycoprotein that affects both the nervous and digestive systems of mammals. In addition, it is a source of both structural and energetic molecules during embryonic development. The tachylectin subunit (31 kDa) binds target membranes while the MACPF subunit (67 kDa) disrupts lipid bilayers forming large pores (inner diameter of about 5.6 nm) altering the plasma membrance conductance. Both in vivo and in vitro, the protein shows wide pH range stability and is resistant to enzymatic proteolysis from gastrointestinal environments. It is cytotoxic to both epithelial and immune cells from the digestive system of mammals. It induces enterocyte death by a lytic mechanism and disrupts enterocyte monolayers in a dose-dependent manner. After oral administration to mice, it binds enterocytes and induces large dose-dependent morphological changes on their small intestine mucosa, reducing the absorptive surface. Additionally, it is detected in the Peyer's patches where it activates lymphoid follicles and triggers apoptosis. The toxin can also traverse the intestinal barrier and induce oral adaptive immunity with evidence of circulating antibody response. The toxin also shows hemagglutination properties thanks to the tachylectin subunit, but has no hemolytic activity. In addition to enterotoxin activity, the toxin also acts as a neurotoxin, since an intraperitoneal injection can induce paralysis of the mice rear limbs, followed by death. The sequence is that of Perivitellin-2 31 kDa subunit from Pomacea maculata (Giant applesnail).